The following is an 89-amino-acid chain: Large ribosomal subunit protein bL31B (89 aa).

The protein belongs to the bacterial ribosomal protein bL31 family. Type B subfamily. Part of the 50S ribosomal subunit.

The chain is Large ribosomal subunit protein bL31B from Corynebacterium urealyticum (strain ATCC 43042 / DSM 7109).